The chain runs to 200 residues: dTTP/UTP pyrophosphatase (200 aa).

The active-site Proton acceptor is the D72.

It belongs to the Maf family. YhdE subfamily. Requires a divalent metal cation as cofactor.

Its subcellular location is the cytoplasm. It carries out the reaction dTTP + H2O = dTMP + diphosphate + H(+). The catalysed reaction is UTP + H2O = UMP + diphosphate + H(+). Functionally, nucleoside triphosphate pyrophosphatase that hydrolyzes dTTP and UTP. May have a dual role in cell division arrest and in preventing the incorporation of modified nucleotides into cellular nucleic acids. This chain is dTTP/UTP pyrophosphatase, found in Pseudomonas savastanoi pv. phaseolicola (strain 1448A / Race 6) (Pseudomonas syringae pv. phaseolicola (strain 1448A / Race 6)).